The primary structure comprises 207 residues: PPYTITYFPVRGRCEAMRMLLADQDQSWKEEVVTMETWPPLKPSCLFRQLPKFQDGDLTLYQSNAILRHLGRSFGLYGKDQKEAALVDMVNDGVEDLRCKYATLIYTNYEAGKEKYVKELPEHLKPFETLLSQNQGGQAFVVGSQISFADYNLLDLLRIHQVLNPSCLDAFPLLSAYVARLSARPKIKAFLASPEHVNRPINGNGKN.

The 78-residue stretch at 1-78 folds into the GST N-terminal domain; sequence PPYTITYFPV…HLGRSFGLYG (78 aa). Tyrosine 3 is subject to Phosphotyrosine; by EGFR. Residues tyrosine 7, arginine 13, tryptophan 38, lysine 42, and 49–50 contribute to the glutathione site; that span reads QL. Phosphothreonine is present on threonine 59. Glutathione is bound at residue 62 to 63; sequence QS. Residues 80–201 enclose the GST C-terminal domain; it reads DQKEAALVDM…ASPEHVNRPI (122 aa). Residues lysine 100 and lysine 113 each carry the N6-succinyllysine modification. Lysine 125 is modified (N6-acetyllysine).

Belongs to the GST superfamily. Pi family. In terms of assembly, homodimer. Interacts with CDK5.

The protein resides in the cytoplasm. It localises to the mitochondrion. The protein localises to the nucleus. The catalysed reaction is RX + glutathione = an S-substituted glutathione + a halide anion + H(+). The enzyme catalyses prostaglandin J2 + glutathione = prostaglandin J2-S-(R)-glutathione. It carries out the reaction prostaglandin J2 + glutathione = prostaglandin J2-S-(S)-glutathione. It catalyses the reaction prostaglandin A2 + glutathione = prostaglandin A2-S-(S)-glutathione. The catalysed reaction is 11(S)-hydroxy-14(S),15(S)-epoxy-(5Z,8Z,12E)-eicosatrienoate + glutathione = (11S,15S)-dihydroxy-14(R)-S-glutathionyl-(5Z,8Z,12E)-eicosatrienoate. Conjugation of reduced glutathione to a wide number of exogenous and endogenous hydrophobic electrophiles. Involved in the formation of glutathione conjugates of both prostaglandin A2 (PGA2) and prostaglandin J2 (PGJ2). Participates in the formation of novel hepoxilin regioisomers. Negatively regulates CDK5 activity via p25/p35 translocation to prevent neurodegeneration. This chain is Glutathione S-transferase P (GSTP1), found in Sus scrofa (Pig).